The sequence spans 206 residues: Small ribosomal subunit protein uS4 (206 aa).

Positions 98-161 (RRLDNVVYRL…RSMELIKNNL (64 aa)) constitute an S4 RNA-binding domain.

Belongs to the universal ribosomal protein uS4 family. In terms of assembly, part of the 30S ribosomal subunit. Contacts protein S5. The interaction surface between S4 and S5 is involved in control of translational fidelity.

One of the primary rRNA binding proteins, it binds directly to 16S rRNA where it nucleates assembly of the body of the 30S subunit. Functionally, with S5 and S12 plays an important role in translational accuracy. This Caldanaerobacter subterraneus subsp. tengcongensis (strain DSM 15242 / JCM 11007 / NBRC 100824 / MB4) (Thermoanaerobacter tengcongensis) protein is Small ribosomal subunit protein uS4.